A 127-amino-acid polypeptide reads, in one-letter code: Large ribosomal subunit protein bL17 (127 aa).

The protein belongs to the bacterial ribosomal protein bL17 family. As to quaternary structure, part of the 50S ribosomal subunit. Contacts protein L32.

This is Large ribosomal subunit protein bL17 from Pelobacter propionicus (strain DSM 2379 / NBRC 103807 / OttBd1).